The following is a 150-amino-acid chain: Phosphopantetheine adenylyltransferase (150 aa).

T9 lines the substrate pocket. ATP contacts are provided by residues 9–10 (TF) and H17. Residues K41, T73, and R87 each contribute to the substrate site. Residues 88–90 (GIR), E98, and 122–128 (LTCVSST) each bind ATP.

The protein belongs to the bacterial CoaD family. In terms of assembly, homohexamer. It depends on Mg(2+) as a cofactor.

The protein resides in the cytoplasm. It catalyses the reaction (R)-4'-phosphopantetheine + ATP + H(+) = 3'-dephospho-CoA + diphosphate. It participates in cofactor biosynthesis; coenzyme A biosynthesis; CoA from (R)-pantothenate: step 4/5. In terms of biological role, reversibly transfers an adenylyl group from ATP to 4'-phosphopantetheine, yielding dephospho-CoA (dPCoA) and pyrophosphate. The protein is Phosphopantetheine adenylyltransferase of Bacteroides fragilis (strain ATCC 25285 / DSM 2151 / CCUG 4856 / JCM 11019 / LMG 10263 / NCTC 9343 / Onslow / VPI 2553 / EN-2).